The following is a 161-amino-acid chain: DNA-directed RNA polymerase 18 kDa subunit (161 aa).

This sequence belongs to the poxviridae DNA-directed RNA polymerase 18 kDa subunit family. The DNA-dependent RNA polymerase used for intermediate and late genes expression consists of eight subunits Rpo30/OPG66, Rpo7/OPG90, Rpo22/OPG103, Rpo147/OPG105, Rpo18/OPG119, Rpo19/OPG131, Rpo132/OPG151 and Rpo35/OPG156. The same holoenzyme, with the addition of the transcription-specificity factor OPG109, is used for early gene expression.

Its subcellular location is the virion. The enzyme catalyses RNA(n) + a ribonucleoside 5'-triphosphate = RNA(n+1) + diphosphate. Its function is as follows. Part of the DNA-dependent RNA polymerase which catalyzes the transcription of viral DNA into RNA using the four ribonucleoside triphosphates as substrates. Responsible for the transcription of early, intermediate and late genes. DNA-dependent RNA polymerase associates with the early transcription factor (ETF), itself composed of OPG118 and OPG133, thereby allowing the early genes transcription. Late transcription, and probably also intermediate transcription, require newly synthesized RNA polymerase. The polypeptide is DNA-directed RNA polymerase 18 kDa subunit (OPG119) (Vaccinia virus (strain Copenhagen) (VACV)).